The primary structure comprises 297 residues: Undecaprenyl-diphosphatase (297 aa).

The next 7 helical transmembrane spans lie at 58-78, 103-123, 138-158, 168-188, 208-228, 243-263, and 274-294; these read PGVA…LSYF, AQMG…GLLI, LAAI…AEQL, LRLA…IPGV, AARF…LVEL, VLAI…AWLL, and FVVY…TGTL.

The protein belongs to the UppP family.

The protein localises to the cell inner membrane. The catalysed reaction is di-trans,octa-cis-undecaprenyl diphosphate + H2O = di-trans,octa-cis-undecaprenyl phosphate + phosphate + H(+). Catalyzes the dephosphorylation of undecaprenyl diphosphate (UPP). Confers resistance to bacitracin. The polypeptide is Undecaprenyl-diphosphatase (Synechococcus sp. (strain ATCC 27144 / PCC 6301 / SAUG 1402/1) (Anacystis nidulans)).